The sequence spans 97 residues: MPTILTQADIQQVLGELKGWAWERDALEKTYRFGSFREAMSFMVRAAFEAEALNHHPEWANVYDRVTVRLATHDAGGKVTAKDVELARRFEKISWVG.

Belongs to the pterin-4-alpha-carbinolamine dehydratase family.

It carries out the reaction (4aS,6R)-4a-hydroxy-L-erythro-5,6,7,8-tetrahydrobiopterin = (6R)-L-erythro-6,7-dihydrobiopterin + H2O. This Opitutus terrae (strain DSM 11246 / JCM 15787 / PB90-1) protein is Putative pterin-4-alpha-carbinolamine dehydratase.